The primary structure comprises 271 residues: Low choriolytic enzyme (271 aa).

Residues 1–20 (MDLLAKASVLLLLLLSLSNA) form the signal peptide. A propeptide spans 21 to 71 (QTDNMEEAENGSSKEEIDESELEDVSSIIFRMNNNSMEELLEGDLVLPKTR) (activation peptide). Residues asparagine 30 and asparagine 54 are each glycosylated (N-linked (GlcNAc...) asparagine). One can recognise a Peptidase M12A domain in the interval 72–271 (NAMKCFGAPD…ILRVNKLYKC (200 aa)). Intrachain disulfides connect cysteine 76-cysteine 83, cysteine 123-cysteine 271, and cysteine 144-cysteine 164. Zn(2+) is bound at residue histidine 172. The active site involves glutamate 173. Residues histidine 176 and histidine 182 each coordinate Zn(2+). Asparagine 211 carries N-linked (GlcNAc...) asparagine glycosylation.

It depends on Zn(2+) as a cofactor.

It is found in the zymogen granule. It catalyses the reaction Hydrolysis of the inner layer of fish egg envelope. Also hydrolysis of casein and small molecule substrates such as succinyl-Leu-Leu-Val-Tyr-|-7-(4-methyl)coumarylamide.. Its function is as follows. Participates in the breakdown of the egg envelope, which is derived from the egg extracellular matrix, at the time of hatching. Thus allowing the newly hatched fish to swim free. LCE solubilizes the egg envelope only after it has been swollen by the action of HCE. This chain is Low choriolytic enzyme (lce), found in Oryzias latipes (Japanese rice fish).